The sequence spans 160 residues: Ribosomal RNA large subunit methyltransferase H (160 aa).

2 residues coordinate S-adenosyl-L-methionine: Leu-77 and Gly-109.

It belongs to the RNA methyltransferase RlmH family. Homodimer.

It localises to the cytoplasm. The enzyme catalyses pseudouridine(1915) in 23S rRNA + S-adenosyl-L-methionine = N(3)-methylpseudouridine(1915) in 23S rRNA + S-adenosyl-L-homocysteine + H(+). Its function is as follows. Specifically methylates the pseudouridine at position 1915 (m3Psi1915) in 23S rRNA. This Moorella thermoacetica (strain ATCC 39073 / JCM 9320) protein is Ribosomal RNA large subunit methyltransferase H.